A 209-amino-acid chain; its full sequence is Ribosomal RNA large subunit methyltransferase E (209 aa).

Gly63, Trp65, Asp83, Asp99, and Asp124 together coordinate S-adenosyl-L-methionine. The Proton acceptor role is filled by Lys164.

It belongs to the class I-like SAM-binding methyltransferase superfamily. RNA methyltransferase RlmE family.

Its subcellular location is the cytoplasm. It catalyses the reaction uridine(2552) in 23S rRNA + S-adenosyl-L-methionine = 2'-O-methyluridine(2552) in 23S rRNA + S-adenosyl-L-homocysteine + H(+). Specifically methylates the uridine in position 2552 of 23S rRNA at the 2'-O position of the ribose in the fully assembled 50S ribosomal subunit. This chain is Ribosomal RNA large subunit methyltransferase E, found in Photobacterium profundum (strain SS9).